The chain runs to 105 residues: Urease subunit gamma (105 aa).

The protein belongs to the urease gamma subunit family. In terms of assembly, heterotrimer of UreA (gamma), UreB (beta) and UreC (alpha) subunits. Three heterotrimers associate to form the active enzyme.

Its subcellular location is the cytoplasm. The enzyme catalyses urea + 2 H2O + H(+) = hydrogencarbonate + 2 NH4(+). Its pathway is nitrogen metabolism; urea degradation; CO(2) and NH(3) from urea (urease route): step 1/1. This is Urease subunit gamma from Bacillus subtilis (strain 168).